A 465-amino-acid polypeptide reads, in one-letter code: Sushi repeat-containing protein SRPX2 (465 aa).

An N-terminal signal peptide occupies residues 1 to 23 (MASQLTQRGALFLLFFLTPAVTP). 3 Sushi domains span residues 69-119 (ATCY…YCRQ), 120-178 (MRCH…VCVD), and 262-321 (RRCP…ICAP). 4 cysteine pairs are disulfide-bonded: C71-C105, C91-C117, C122-C163, and C149-C176. The region spanning 177-261 (VDIDPPKIRC…SCKFIVKVQV (85 aa)) is the HYR domain. 2 cysteine pairs are disulfide-bonded: C264–C306 and C292–C319.

Forms homooligomers. Interacts with PLAUR (via the UPAR/Ly6 domains), ADAMTS4 and CTSB. Interacts with HGF; the interaction increases the mitogenic activity of HGF. Contains chondroitin sulfate chains. Expressed in neurons of the rolandic area of the brain (at protein level). Highly expressed in the brain, placenta, lung, trachea, uterus, adrenal gland, heart, ovary and placenta. Weakly expressed in the peripheral blood, brain and bone marrow. Expressed in numerous cancer cell lines and in gastrointestinal cancer cells. Higher levels found in colorectal cancers than in normal colonic mucosa.

It localises to the secreted. The protein localises to the cytoplasm. Its subcellular location is the cell surface. It is found in the synapse. In terms of biological role, acts as a ligand for the urokinase plasminogen activator surface receptor. Plays a role in angiogenesis by inducing endothelial cell migration and the formation of vascular network (cords). Involved in cellular migration and adhesion. Increases the phosphorylation levels of FAK. Interacts with and increases the mitogenic activity of HGF. Promotes synapse formation. May have a role in the perisylvian region, critical for language and cognitive development. This is Sushi repeat-containing protein SRPX2 (SRPX2) from Homo sapiens (Human).